We begin with the raw amino-acid sequence, 207 residues long: Large ribosomal subunit protein uL3c (207 aa).

The tract at residues 129–148 (TRGPMTHGSKNHRAPGSIGM) is disordered.

This sequence belongs to the universal ribosomal protein uL3 family. In terms of assembly, part of the 50S ribosomal subunit.

It localises to the plastid. The protein localises to the chloroplast. Its function is as follows. One of the primary rRNA binding proteins, it binds directly near the 3'-end of the 23S rRNA, where it nucleates assembly of the 50S subunit. This is Large ribosomal subunit protein uL3c (rpl3) from Phaeodactylum tricornutum (strain CCAP 1055/1).